A 389-amino-acid polypeptide reads, in one-letter code: Inner membrane transport protein YdhP (389 aa).

The Cytoplasmic segment spans residues 1–6; sequence MKINYP. A helical membrane pass occupies residues 7–27; sequence LLALAIGAFGIGTTEFSPMGL. Residues 28-43 are Periplasmic-facing; it reads LPVIARGVDVSIPAAG. A helical membrane pass occupies residues 44–64; the sequence is MLISAYAVGVMVGAPLMTLLL. The Cytoplasmic segment spans residues 65–70; that stretch reads SHRARR. Residues 71 to 91 traverse the membrane as a helical segment; it reads SALIFLMAIFTLGNVLSAIAP. The Periplasmic portion of the chain corresponds to 92 to 100; it reads DYMTLMLSR. Residues 101-121 traverse the membrane as a helical segment; it reads ILTSLNHGAFFGLGSVVAASV. Over 122-130 the chain is Cytoplasmic; that stretch reads VPKHKQASA. The chain crosses the membrane as a helical span at residues 131–151; sequence VATMFMGLTLANIGGVPAATW. Topologically, residues 152-159 are periplasmic; it reads LGETIGWR. A helical membrane pass occupies residues 160–180; sequence MSFLATAGLGVISMVSLFFSL. The Cytoplasmic segment spans residues 181–203; that stretch reads PKGGAGARPEVKKELAVLMRPQV. A helical transmembrane segment spans residues 204–224; the sequence is LSALLTTVLGAGAMFTLYTYI. Residues 225–236 lie on the Periplasmic side of the membrane; sequence SPVLQSITHATP. A helical transmembrane segment spans residues 237 to 257; sequence VFVTAMLVLIGVGFSIGNYLG. The Cytoplasmic portion of the chain corresponds to 258–266; the sequence is GKLADRSVN. Residues 267-287 traverse the membrane as a helical segment; it reads GTLKGFLLLLMVIMLAIPFLA. Residues 288-290 lie on the Periplasmic side of the membrane; that stretch reads RNE. The helical transmembrane segment at 291–311 threads the bilayer; sequence FGAAISMVVWGAATFAVVPPL. Topologically, residues 312–330 are cytoplasmic; the sequence is QMRVMRVASEAPGLSSSVN. Residues 331 to 351 traverse the membrane as a helical segment; it reads IGAFNLGNALGAAAGGAVISA. At 352–356 the chain is on the periplasmic side; sequence GLGYS. A helical membrane pass occupies residues 357–377; it reads FVPVMGAIVAGLALLLVFMSA. The Cytoplasmic portion of the chain corresponds to 378–389; it reads RKQPETVCVANS.

Belongs to the major facilitator superfamily.

The protein resides in the cell inner membrane. In Escherichia coli (strain K12), this protein is Inner membrane transport protein YdhP (ydhP).